Reading from the N-terminus, the 196-residue chain is Protein GrpE (196 aa).

The span at 1–26 shows a compositional bias: basic and acidic residues; the sequence is MQEPHNQEPIEEQKLSEMEDTLEKQH. The interval 1-40 is disordered; sequence MQEPHNQEPIEEQKLSEMEDTLEKQHSGASTENTERAEEG.

This sequence belongs to the GrpE family. In terms of assembly, homodimer.

The protein resides in the cytoplasm. In terms of biological role, participates actively in the response to hyperosmotic and heat shock by preventing the aggregation of stress-denatured proteins, in association with DnaK and GrpE. It is the nucleotide exchange factor for DnaK and may function as a thermosensor. Unfolded proteins bind initially to DnaJ; upon interaction with the DnaJ-bound protein, DnaK hydrolyzes its bound ATP, resulting in the formation of a stable complex. GrpE releases ADP from DnaK; ATP binding to DnaK triggers the release of the substrate protein, thus completing the reaction cycle. Several rounds of ATP-dependent interactions between DnaJ, DnaK and GrpE are required for fully efficient folding. The chain is Protein GrpE from Nitrosomonas eutropha (strain DSM 101675 / C91 / Nm57).